Reading from the N-terminus, the 574-residue chain is Galactose transporter (574 aa).

Positions 1 to 57 (MAVEENNMPVVSQQPQAGEDVISSLSKDSHLSAQSQKYSNDELKAGESGSEGSQSVP) are disordered. Over 1–70 (MAVEENNMPV…PKKPMSEYVT (70 aa)) the chain is Cytoplasmic. Residues 23 to 38 (SSLSKDSHLSAQSQKY) show a composition bias toward polar residues. A phosphoserine mark is found at Ser-32, Ser-35, Ser-39, Ser-48, Ser-50, Ser-53, and Ser-55. A helical membrane pass occupies residues 71–91 (VSLLCLCVAFGGFMFGWDTGT). Over 92–121 (ISGFVVQTDFLRRFGMKHKDGTHYLSNVRT) the chain is Extracellular. Residues 122-142 (GLIVAIFNIGCAFGGIILSKG) traverse the membrane as a helical segment. Residues 143–149 (GDMYGRK) lie on the Cytoplasmic side of the membrane. Residues 150-170 (KGLSIVVSVYIVGIIIQIASI) form a helical membrane-spanning segment. Over 171 to 175 (NKWYQ) the chain is Extracellular. Residues 176 to 196 (YFIGRIISGLGVGGIAVLCPM) form a helical membrane-spanning segment. Topologically, residues 197–207 (LISEIAPKHLR) are cytoplasmic. A helical membrane pass occupies residues 208-228 (GTLVSCYQLMITAGIFLGYCT). The Extracellular segment spans residues 229 to 242 (NYGTKSYSNSVQWR). A helical transmembrane segment spans residues 243 to 263 (VPLGLCFAWSLFMIGALTLVP). Residues 264-342 (ESPRYLCEVN…MGVFVQMFQQ (79 aa)) lie on the Cytoplasmic side of the membrane. The helical transmembrane segment at 343 to 362 (LTGNNYFFYYGTVIFKSVGL) threads the bilayer. Residues 363-366 (DDSF) are Extracellular-facing. A helical membrane pass occupies residues 367–387 (ETSIVIGVVNFASTFFSLWTV). At 388 to 394 (ENLGHRK) the chain is on the cytoplasmic side. Residues 395–415 (CLLLGAATMMACMVIYASVGV) traverse the membrane as a helical segment. The Extracellular segment spans residues 416–435 (TRLYPHGKSQPSSKGAGNCM). Residues 436-456 (IVFTCFYIFCYATTWAPVAWV) traverse the membrane as a helical segment. The Cytoplasmic segment spans residues 457–472 (ITAESFPLRVKSKCMA). A helical membrane pass occupies residues 473–493 (LASASNWVWGFLIAFFTPFIT). The Extracellular portion of the chain corresponds to 494–499 (SAINFY). A helical transmembrane segment spans residues 500 to 520 (YGYVFMGCLVAMFFYVFFFVP). The Cytoplasmic segment spans residues 521–574 (ETKGLSLEEIQELWEEGVLPWKSEGWIPSSRRGNNYDLEDLQHDDKPWYKAMLE).

The protein belongs to the major facilitator superfamily. Sugar transporter (TC 2.A.1.1) family.

The protein resides in the membrane. Functionally, GAL2 is a facilitated diffusion transporter required for both the high-affinity galactokinase-dependent and low-affinity galactokinase-independent galactose transport processes. This is Galactose transporter (GAL2) from Saccharomyces cerevisiae (strain ATCC 204508 / S288c) (Baker's yeast).